The following is a 511-amino-acid chain: Probable mannosyl-oligosaccharide alpha-1,2-mannosidase 1B (511 aa).

The N-terminal stretch at 1 to 18 (MHLPSLSLAWALAGSSLA) is a signal peptide. N-linked (GlcNAc...) asparagine glycans are attached at residues asparagine 90 and asparagine 177. Cysteine 327 and cysteine 356 are disulfide-bonded. Catalysis depends on glutamate 370, which acts as the Proton donor. Asparagine 433 is a glycosylation site (N-linked (GlcNAc...) asparagine). Threonine 501 contributes to the Ca(2+) binding site.

This sequence belongs to the glycosyl hydrolase 47 family. Monomer. Requires Ca(2+) as cofactor. Mg(2+) serves as cofactor.

The protein resides in the cytoplasmic vesicle lumen. The enzyme catalyses N(4)-(alpha-D-Man-(1-&gt;2)-alpha-D-Man-(1-&gt;2)-alpha-D-Man-(1-&gt;3)-[alpha-D-Man-(1-&gt;2)-alpha-D-Man-(1-&gt;3)-[alpha-D-Man-(1-&gt;2)-alpha-D-Man-(1-&gt;6)]-alpha-D-Man-(1-&gt;6)]-beta-D-Man-(1-&gt;4)-beta-D-GlcNAc-(1-&gt;4)-beta-D-GlcNAc)-L-asparaginyl-[protein] (N-glucan mannose isomer 9A1,2,3B1,2,3) + 4 H2O = N(4)-(alpha-D-Man-(1-&gt;3)-[alpha-D-Man-(1-&gt;3)-[alpha-D-Man-(1-&gt;6)]-alpha-D-Man-(1-&gt;6)]-beta-D-Man-(1-&gt;4)-beta-D-GlcNAc-(1-&gt;4)-beta-D-GlcNAc)-L-asparaginyl-[protein] (N-glucan mannose isomer 5A1,2) + 4 beta-D-mannose. It carries out the reaction N(4)-(alpha-D-Man-(1-&gt;2)-alpha-D-Man-(1-&gt;2)-alpha-D-Man-(1-&gt;3)-[alpha-D-Man-(1-&gt;3)-[alpha-D-Man-(1-&gt;2)-alpha-D-Man-(1-&gt;6)]-alpha-D-Man-(1-&gt;6)]-beta-D-Man-(1-&gt;4)-beta-D-GlcNAc-(1-&gt;4)-beta-D-GlcNAc)-L-asparaginyl-[protein] (N-glucan mannose isomer 8A1,2,3B1,3) + 3 H2O = N(4)-(alpha-D-Man-(1-&gt;3)-[alpha-D-Man-(1-&gt;3)-[alpha-D-Man-(1-&gt;6)]-alpha-D-Man-(1-&gt;6)]-beta-D-Man-(1-&gt;4)-beta-D-GlcNAc-(1-&gt;4)-beta-D-GlcNAc)-L-asparaginyl-[protein] (N-glucan mannose isomer 5A1,2) + 3 beta-D-mannose. It functions in the pathway protein modification; protein glycosylation. Involved in the maturation of Asn-linked oligosaccharides. Progressively trims alpha-1,2-linked mannose residues from Man(9)GlcNAc(2) to produce Man(5)GlcNAc(2). The sequence is that of Probable mannosyl-oligosaccharide alpha-1,2-mannosidase 1B (mns1B) from Aspergillus clavatus (strain ATCC 1007 / CBS 513.65 / DSM 816 / NCTC 3887 / NRRL 1 / QM 1276 / 107).